The chain runs to 348 residues: Zinc-type alcohol dehydrogenase-like protein C2E1P3.01 (348 aa).

Belongs to the zinc-containing alcohol dehydrogenase family. Quinone oxidoreductase subfamily.

It is found in the mitochondrion. This is Zinc-type alcohol dehydrogenase-like protein C2E1P3.01 from Schizosaccharomyces pombe (strain 972 / ATCC 24843) (Fission yeast).